A 270-amino-acid chain; its full sequence is G-box-binding factor 4 (270 aa).

A disordered region spans residues 1–46; the sequence is MASFKLMSSSNSDLSRRNSSSASSSPSIRSSHHLRPNPHADHSRIS. The segment covering 8 to 29 has biased composition (low complexity); the sequence is SSSNSDLSRRNSSSASSSPSIR. A Phosphoserine modification is found at Ser27. One can recognise a bZIP domain in the interval 187–250; sequence AAQRQKRMIK…YKKLMEVLIP (64 aa). A basic motif region spans residues 190 to 208; the sequence is RQKRMIKNRESAARSRERK. The segment at 215 to 229 is leucine-zipper; sequence LETLAAKLEEENEQL. Residues 250–270 form a disordered region; it reads PVDEKPRPPSRPLSRSHSLEW. The span at 261–270 shows a compositional bias: low complexity; sequence PLSRSHSLEW.

This sequence belongs to the bZIP family. As to quaternary structure, DNA-binding heterodimer with GBF2 and GBF3; non DNA-binding homodimer.

The protein resides in the nucleus. In terms of biological role, binds to the G-box motif (5'-CCACGTGG-3') of the rbcS-1A gene promoter. G-box and G-box-like motifs are cis-acting elements defined in promoters of certain plant genes which are regulated by such diverse stimuli as light-induction or hormone control. The protein is G-box-binding factor 4 (GBF4) of Arabidopsis thaliana (Mouse-ear cress).